A 359-amino-acid chain; its full sequence is 4-hydroxy-3-methylbut-2-en-1-yl diphosphate synthase (flavodoxin) (359 aa).

[4Fe-4S] cluster-binding residues include Cys264, Cys267, Cys299, and Glu306.

The protein belongs to the IspG family. The cofactor is [4Fe-4S] cluster.

It catalyses the reaction (2E)-4-hydroxy-3-methylbut-2-enyl diphosphate + oxidized [flavodoxin] + H2O + 2 H(+) = 2-C-methyl-D-erythritol 2,4-cyclic diphosphate + reduced [flavodoxin]. It functions in the pathway isoprenoid biosynthesis; isopentenyl diphosphate biosynthesis via DXP pathway; isopentenyl diphosphate from 1-deoxy-D-xylulose 5-phosphate: step 5/6. Functionally, converts 2C-methyl-D-erythritol 2,4-cyclodiphosphate (ME-2,4cPP) into 1-hydroxy-2-methyl-2-(E)-butenyl 4-diphosphate. The protein is 4-hydroxy-3-methylbut-2-en-1-yl diphosphate synthase (flavodoxin) of Helicobacter pylori (strain J99 / ATCC 700824) (Campylobacter pylori J99).